A 441-amino-acid polypeptide reads, in one-letter code: MKFSITLALCFTLSIFLIGSQAKVPVDDQFRVVNEGGYTDYSPIEYNPDVRGFVPFSDNFRLCFYNTTPNAYTLALRIGNRVQESTLRWVWEANRGSPVKENATLTFGEDGNLVLAEADGRLVWQTNTANKGAVGIKILENGNMVIYDSSGKFVWQSFDSPTDTLLVGQSLKLNGRTKLVSRLSPSVNTNGPYSLVMEAKKLVLYYTTNKTPKPIAYFEYEFFTKITQFQSMTFQAVEDSDTTWGLVMEGVDSGSKFNVSTFLSRPKHNATLSFIRLESDGNIRVWSYSTLATSTAWDVTYTAFTNADTDGNDECRIPEHCLGFGLCKKGQCNACPSDKGLLGWDETCKSPSLASCDPKTFHYFKIEGADSFMTKYNGGSSTTESACGDKCTRDCKCLGFFYNRKSSRCWLGYELKTLTRTGDSSLVAYVKAPNANKKSTL.

Positions 1–22 (MKFSITLALCFTLSIFLIGSQA) are cleaved as a signal peptide. The Bulb-type lectin domain maps to 29–159 (QFRVVNEGGY…SGKFVWQSFD (131 aa)). 3 N-linked (GlcNAc...) asparagine glycosylation sites follow: asparagine 102, asparagine 258, and asparagine 269. Residues 254–296 (GSKFNVSTFLSRPKHNATLSFIRLESDGNIRVWSYSTLATSTA) form a WD repeat. Positions 356–433 (CDPKTFHYFK…SSLVAYVKAP (78 aa)) constitute a PAN domain. 2 disulfide bridges follow: cysteine 387-cysteine 409 and cysteine 391-cysteine 397.

In terms of processing, phosphorylated on tyrosine.

The protein localises to the secreted. The protein resides in the cell wall. Functionally, may be involved in a cell-to cell programmed cell death (PCD) signaling mechanism. In Arabidopsis thaliana (Mouse-ear cress), this protein is EP1-like glycoprotein 3.